We begin with the raw amino-acid sequence, 116 residues long: Large ribosomal subunit protein bL17 (116 aa).

This sequence belongs to the bacterial ribosomal protein bL17 family. Part of the 50S ribosomal subunit. Contacts protein L32.

The chain is Large ribosomal subunit protein bL17 from Synechococcus sp. (strain WH7803).